A 595-amino-acid polypeptide reads, in one-letter code: Mitoguardin 1 (595 aa).

Helical transmembrane passes span 11–31 and 38–58; these read LPIK…YYSL and TGTK…IIIA.

The protein belongs to the mitoguardin family. Homodimer and heterodimer; forms heterodimers with miga2.

The protein resides in the mitochondrion outer membrane. In terms of biological role, regulator of mitochondrial fusion: acts by forming homo- and heterodimers at the mitochondrial outer membrane and facilitating the formation of pld6/MitoPLD dimers. May act by regulating phospholipid metabolism via pld6/MitoPLD. This is Mitoguardin 1 from Danio rerio (Zebrafish).